Consider the following 316-residue polypeptide: Transaldolase (316 aa).

K131 serves as the catalytic Schiff-base intermediate with substrate.

Belongs to the transaldolase family. Type 1 subfamily. As to quaternary structure, homodimer.

It localises to the cytoplasm. The catalysed reaction is D-sedoheptulose 7-phosphate + D-glyceraldehyde 3-phosphate = D-erythrose 4-phosphate + beta-D-fructose 6-phosphate. It participates in carbohydrate degradation; pentose phosphate pathway; D-glyceraldehyde 3-phosphate and beta-D-fructose 6-phosphate from D-ribose 5-phosphate and D-xylulose 5-phosphate (non-oxidative stage): step 2/3. Its function is as follows. Transaldolase is important for the balance of metabolites in the pentose-phosphate pathway. This is Transaldolase from Buchnera aphidicola subsp. Baizongia pistaciae (strain Bp).